The sequence spans 92 residues: Small ribosomal subunit protein uS19 (92 aa).

It belongs to the universal ribosomal protein uS19 family.

Its function is as follows. Protein S19 forms a complex with S13 that binds strongly to the 16S ribosomal RNA. This Sulfurovum sp. (strain NBC37-1) protein is Small ribosomal subunit protein uS19.